The chain runs to 104 residues: Co-chaperonin GroES 3 (104 aa).

This sequence belongs to the GroES chaperonin family. As to quaternary structure, heptamer of 7 subunits arranged in a ring. Interacts with the chaperonin GroEL.

The protein localises to the cytoplasm. Its function is as follows. Together with the chaperonin GroEL, plays an essential role in assisting protein folding. The GroEL-GroES system forms a nano-cage that allows encapsulation of the non-native substrate proteins and provides a physical environment optimized to promote and accelerate protein folding. GroES binds to the apical surface of the GroEL ring, thereby capping the opening of the GroEL channel. The sequence is that of Co-chaperonin GroES 3 from Bradyrhizobium diazoefficiens (strain JCM 10833 / BCRC 13528 / IAM 13628 / NBRC 14792 / USDA 110).